We begin with the raw amino-acid sequence, 196 residues long: Large ribosomal subunit protein uL6 (196 aa).

The protein belongs to the universal ribosomal protein uL6 family. Part of the 50S ribosomal subunit.

Its function is as follows. This protein binds to the 23S rRNA, and is important in its secondary structure. It is located near the subunit interface in the base of the L7/L12 stalk, and near the tRNA binding site of the peptidyltransferase center. In Archaeoglobus fulgidus (strain ATCC 49558 / DSM 4304 / JCM 9628 / NBRC 100126 / VC-16), this protein is Large ribosomal subunit protein uL6.